A 139-amino-acid polypeptide reads, in one-letter code: Membrane protein YqfB (139 aa).

A helical membrane pass occupies residues 3–23 (DLLTNPLIIAAIIGIISAIFG). Residues 25 to 87 (KSKEEKQNSQ…TARNLKGLER (63 aa)) are disordered. Residues 62-97 (NRMEQARREAEERRRETARNLKGLERDLAAAKQKTV) are a coiled coil. The segment covering 65-87 (EQARREAEERRRETARNLKGLER) has biased composition (basic and acidic residues).

Its subcellular location is the cell membrane. This Bacillus subtilis (strain 168) protein is Membrane protein YqfB (yqfB).